The following is a 158-amino-acid chain: Large ribosomal subunit protein uL30 (158 aa).

It belongs to the universal ribosomal protein uL30 family. As to quaternary structure, part of the 50S ribosomal subunit.

The polypeptide is Large ribosomal subunit protein uL30 (Saccharolobus solfataricus (strain ATCC 35092 / DSM 1617 / JCM 11322 / P2) (Sulfolobus solfataricus)).